A 156-amino-acid polypeptide reads, in one-letter code: Small ribosomal subunit protein uS7A/uS7B (156 aa).

Belongs to the universal ribosomal protein uS7 family. In terms of assembly, part of the 30S ribosomal subunit. Contacts proteins S9 and S11.

Functionally, one of the primary rRNA binding proteins, it binds directly to 16S rRNA where it nucleates assembly of the head domain of the 30S subunit. Is located at the subunit interface close to the decoding center, probably blocks exit of the E-site tRNA. The sequence is that of Small ribosomal subunit protein uS7A/uS7B from Bartonella bacilliformis (strain ATCC 35685 / KC583 / Herrer 020/F12,63).